Consider the following 318-residue polypeptide: GTP cyclohydrolase MptA (318 aa).

It belongs to the GTP cyclohydrolase IV family. As to quaternary structure, homodimer. Requires Fe(2+) as cofactor.

The catalysed reaction is GTP + H2O = 7,8-dihydroneopterin 2',3'-cyclic phosphate + formate + diphosphate + H(+). Its pathway is cofactor biosynthesis; 5,6,7,8-tetrahydromethanopterin biosynthesis. Converts GTP to 7,8-dihydro-D-neopterin 2',3'-cyclic phosphate, the first intermediate in the biosynthesis of coenzyme methanopterin. In Methanosarcina acetivorans (strain ATCC 35395 / DSM 2834 / JCM 12185 / C2A), this protein is GTP cyclohydrolase MptA.